The sequence spans 60 residues: Large ribosomal subunit protein uL30 (60 aa).

The protein belongs to the universal ribosomal protein uL30 family. Part of the 50S ribosomal subunit.

This chain is Large ribosomal subunit protein uL30, found in Paraburkholderia phytofirmans (strain DSM 17436 / LMG 22146 / PsJN) (Burkholderia phytofirmans).